A 91-amino-acid chain; its full sequence is Glycophorin-B (91 aa).

Residues 1 to 19 (MYGKIIFVLLLSEIVSISA) form the signal peptide. At 20 to 59 (LSTTEVAMHTSTSSSVTKSYISSQTNGETGQLVHRFTVPA) the chain is on the extracellular side. T36 carries O-linked (GalNAc...) threonine glycosylation. O-linked (GalNAc...) serine glycosylation is present at S38. Residues 60 to 81 (PVVIILIILCVMAGIIGTILLI) form a helical membrane-spanning segment. At 82–91 (SYSIRRLIKA) the chain is on the cytoplasmic side.

This sequence belongs to the glycophorin-A family. Component of the ankyrin-1 complex in the erythrocyte, composed of ANK1, RHCE, RHAG, SLC4A1, EPB42, GYPA, GYPB and AQP1. Interacts (via the N-terminal) with RHAG; this interaction bridges the (RHAG)2(RHCE) heterotrimer with the SLC4A1 Band 3 I dimer complexed with GYPA. In terms of processing, the N-terminal extracellular domain is heavily glycosylated on serine and threonine residues.

The protein localises to the cell membrane. Functionally, component of the ankyrin-1 complex, a multiprotein complex involved in the stability and shape of the erythrocyte membrane. This is Glycophorin-B from Homo sapiens (Human).